A 354-amino-acid chain; its full sequence is Putrescine/cadaverine-binding protein (354 aa).

Residues 1–20 form the signal peptide; the sequence is MMKKLLLVATLMAGAAQATA.

Belongs to the bacterial solute-binding protein 1 family.

Its subcellular location is the periplasm. Its function is as follows. Binds putrescine and cadaverine. The polypeptide is Putrescine/cadaverine-binding protein (Pseudomonas aeruginosa (strain ATCC 15692 / DSM 22644 / CIP 104116 / JCM 14847 / LMG 12228 / 1C / PRS 101 / PAO1)).